The sequence spans 166 residues: Phosphopantetheine adenylyltransferase (166 aa).

Position 11 (Thr11) interacts with substrate. ATP contacts are provided by residues 11-12 (TF) and His19. Positions 43, 79, and 93 each coordinate substrate. ATP is bound by residues Glu104 and 128–134 (LEPLNST).

The protein belongs to the bacterial CoaD family. As to quaternary structure, homohexamer. The cofactor is Mg(2+).

It localises to the cytoplasm. It catalyses the reaction (R)-4'-phosphopantetheine + ATP + H(+) = 3'-dephospho-CoA + diphosphate. The protein operates within cofactor biosynthesis; coenzyme A biosynthesis; CoA from (R)-pantothenate: step 4/5. Functionally, reversibly transfers an adenylyl group from ATP to 4'-phosphopantetheine, yielding dephospho-CoA (dPCoA) and pyrophosphate. The sequence is that of Phosphopantetheine adenylyltransferase from Lactococcus lactis subsp. cremoris (strain MG1363).